The chain runs to 304 residues: MSTRTEAVKAYLLDLQDRICTALEQEDGSAHFMEDAWTRPAGGGGRTRVIENGTVIEKGGVNFSHVFGSNLPPSASAHRPELAGRGFEALGVSLVIHPHNPHVPTSHANVRFFIAEKEGEEAVWWFGGGFDLTPYYGVEEDCVHWHRVAERACAPFGEDVYPRYKAWCDSYFHLKHRDEPRGIGGLFFDDVNQWDFDTSFAFIRAIGDAFINAYLPIVRRRKAAAYTVQQREFQEFRRGRYVEFNLVYDRGTLFGLQSGGRTESILMSLPPQVRWGYDWKAAPGSEEARLTEYFLTDRDWLAEN.

Position 93 (S93) interacts with substrate. H97 and H107 together coordinate a divalent metal cation. Catalysis depends on H107, which acts as the Proton donor. Residue 109 to 111 coordinates substrate; sequence NVR. The a divalent metal cation site is built by H146 and H176. Residues 241–276 form an important for dimerization region; it reads YVEFNLVYDRGTLFGLQSGGRTESILMSLPPQVRWG. 259 to 261 serves as a coordination point for substrate; it reads GGR.

It belongs to the aerobic coproporphyrinogen-III oxidase family. As to quaternary structure, homodimer. The cofactor is a divalent metal cation.

The protein resides in the cytoplasm. It carries out the reaction coproporphyrinogen III + O2 + 2 H(+) = protoporphyrinogen IX + 2 CO2 + 2 H2O. The protein operates within porphyrin-containing compound metabolism; protoporphyrin-IX biosynthesis; protoporphyrinogen-IX from coproporphyrinogen-III (O2 route): step 1/1. Functionally, involved in the heme biosynthesis. Catalyzes the aerobic oxidative decarboxylation of propionate groups of rings A and B of coproporphyrinogen-III to yield the vinyl groups in protoporphyrinogen-IX. In Pseudomonas syringae pv. syringae (strain B728a), this protein is Oxygen-dependent coproporphyrinogen-III oxidase.